A 134-amino-acid polypeptide reads, in one-letter code: MATIFTKIINRELPGRFVYEDDDVVAFLTIEPMTQGHTLVVPCAEIDQWQNVDPAIFGRVIAVSQLIGKGVCRAFNAERAGVIIAGFEVPHLHIHVFPTHSLSNFSFANVDRNPSPESLDAAQDKIKAALTQLA.

One can recognise an HIT domain in the interval 4 to 107 (IFTKIINREL…PTHSLSNFSF (104 aa)). Positions 91–95 (HLHIH) match the Histidine triad motif motif.

This is an uncharacterized protein from Mycobacterium leprae (strain TN).